The chain runs to 428 residues: Probable pectin lyase F (428 aa).

A signal peptide spans 1-20 (MVLLHPLLTAAALLGASARA). Cys83 and Cys107 are joined by a disulfide. Residue Arg257 is part of the active site. Asn276 is a glycosylation site (N-linked (GlcNAc...) asparagine). The cysteines at positions 324 and 332 are disulfide-linked. 2 disordered regions span residues 337-367 (LTSS…MTTD) and 383-428 (GSGG…HHHY). Residues 389 to 417 (AASSSASITPSPTSSAIPSSSATPSSSAY) show a composition bias toward low complexity. The span at 418 to 428 (ARRHYARHHHY) shows a compositional bias: basic residues.

It belongs to the polysaccharide lyase 1 family.

It is found in the secreted. The enzyme catalyses Eliminative cleavage of (1-&gt;4)-alpha-D-galacturonan methyl ester to give oligosaccharides with 4-deoxy-6-O-methyl-alpha-D-galact-4-enuronosyl groups at their non-reducing ends.. In terms of biological role, pectinolytic enzymes consist of four classes of enzymes: pectin lyase, polygalacturonase, pectin methylesterase and rhamnogalacturonase. Among pectinolytic enzymes, pectin lyase is the most important in depolymerization of pectin, since it cleaves internal glycosidic bonds of highly methylated pectins. In Aspergillus flavus (strain ATCC 200026 / FGSC A1120 / IAM 13836 / NRRL 3357 / JCM 12722 / SRRC 167), this protein is Probable pectin lyase F (pelF).